The following is a 249-amino-acid chain: Triosephosphate isomerase (249 aa).

12 to 14 (NWK) lines the substrate pocket. H96 acts as the Electrophile in catalysis. E166 serves as the catalytic Proton acceptor. Residues G172, S211, and 232-233 (GG) contribute to the substrate site.

The protein belongs to the triosephosphate isomerase family. In terms of assembly, homodimer.

It is found in the cytoplasm. It carries out the reaction D-glyceraldehyde 3-phosphate = dihydroxyacetone phosphate. Its pathway is carbohydrate biosynthesis; gluconeogenesis. It functions in the pathway carbohydrate degradation; glycolysis; D-glyceraldehyde 3-phosphate from glycerone phosphate: step 1/1. Its function is as follows. Involved in the gluconeogenesis. Catalyzes stereospecifically the conversion of dihydroxyacetone phosphate (DHAP) to D-glyceraldehyde-3-phosphate (G3P). This is Triosephosphate isomerase from Xanthobacter flavus.